The sequence spans 366 residues: Glucose 1-dehydrogenase 2 (366 aa).

A Zn(2+)-binding site is contributed by Cys-39. Ser-41 is a binding site for substrate. Positions 66 and 67 each coordinate Zn(2+). Asn-90, Glu-116, Gln-152, and Asp-156 together coordinate substrate. Gln-152 is a binding site for Zn(2+). NADP(+) is bound by residues 212–214 (NRR), 277–279 (FGF), 305–307 (LIN), and Lys-354. Asn-307 serves as a coordination point for substrate.

Belongs to the zinc-containing alcohol dehydrogenase family. Glucose 1-dehydrogenase subfamily. Zn(2+) is required as a cofactor.

The catalysed reaction is D-glucose + NAD(+) = D-glucono-1,5-lactone + NADH + H(+). It catalyses the reaction D-glucose + NADP(+) = D-glucono-1,5-lactone + NADPH + H(+). In terms of biological role, catalyzes the NAD(P)(+)-dependent oxidation of D-glucose to D-gluconate via gluconolactone. Can utilize both NAD(+) and NADP(+) as electron acceptor. Is involved in the degradation of glucose through a non-phosphorylative variant of the Entner-Doudoroff pathway. This chain is Glucose 1-dehydrogenase 2, found in Caldivirga maquilingensis (strain ATCC 700844 / DSM 13496 / JCM 10307 / IC-167).